Consider the following 325-residue polypeptide: MIARIWSGESPLWRLLLPLSWLYGLVSGAIRLSYKLGFKRAWRAPVPVVVVGNLTAGGNGKTPVVIWLVEKLQQRGVRVGVVSRGYGGKAAAYPLLLTPETTTAEAGDEPVLIYQRTGAPVAVAPERAAAVKAILAAHNVQIIITDDGLQHYRLARDIEIVVIDGVRRFGNGWWLPAGPMRERASRLKTVDAAIVNGGVARVGEIPMQLAPGLAVNLRTGARCDVAQLSNIVAMAGIGHPPRFFATLEACGAHPQKCVPLADHQTLAPADVQALVGEGQTLVMTEKDAVKCRAFAEDNWWFLPVDARLSGEQPDKLLEHITSLVR.

55-62 (TAGGNGKT) serves as a coordination point for ATP.

This sequence belongs to the LpxK family.

It catalyses the reaction a lipid A disaccharide + ATP = a lipid IVA + ADP + H(+). Its pathway is glycolipid biosynthesis; lipid IV(A) biosynthesis; lipid IV(A) from (3R)-3-hydroxytetradecanoyl-[acyl-carrier-protein] and UDP-N-acetyl-alpha-D-glucosamine: step 6/6. Functionally, transfers the gamma-phosphate of ATP to the 4'-position of a tetraacyldisaccharide 1-phosphate intermediate (termed DS-1-P) to form tetraacyldisaccharide 1,4'-bis-phosphate (lipid IVA). This chain is Tetraacyldisaccharide 4'-kinase, found in Salmonella choleraesuis (strain SC-B67).